We begin with the raw amino-acid sequence, 154 residues long: Endoribonuclease YbeY (154 aa).

3 residues coordinate Zn(2+): histidine 114, histidine 118, and histidine 124.

Belongs to the endoribonuclease YbeY family. Zn(2+) is required as a cofactor.

It localises to the cytoplasm. Its function is as follows. Single strand-specific metallo-endoribonuclease involved in late-stage 70S ribosome quality control and in maturation of the 3' terminus of the 16S rRNA. In Haemophilus influenzae (strain ATCC 51907 / DSM 11121 / KW20 / Rd), this protein is Endoribonuclease YbeY.